A 283-amino-acid chain; its full sequence is Diaminopimelate epimerase (283 aa).

Substrate contacts are provided by asparagine 13, glutamine 45, and asparagine 65. Cysteine 74 (proton donor) is an active-site residue. Residues 75 to 76, asparagine 156, asparagine 190, and 208 to 209 each bind substrate; these read GN and ER. The active-site Proton acceptor is cysteine 217. 218-219 contributes to the substrate binding site; the sequence is GS.

This sequence belongs to the diaminopimelate epimerase family. As to quaternary structure, homodimer.

Its subcellular location is the cytoplasm. The catalysed reaction is (2S,6S)-2,6-diaminopimelate = meso-2,6-diaminopimelate. It participates in amino-acid biosynthesis; L-lysine biosynthesis via DAP pathway; DL-2,6-diaminopimelate from LL-2,6-diaminopimelate: step 1/1. Its function is as follows. Catalyzes the stereoinversion of LL-2,6-diaminopimelate (L,L-DAP) to meso-diaminopimelate (meso-DAP), a precursor of L-lysine and an essential component of the bacterial peptidoglycan. The polypeptide is Diaminopimelate epimerase (Bartonella tribocorum (strain CIP 105476 / IBS 506)).